The sequence spans 95 residues: uncharacterized protein (95 aa).

Positions methionine 1 to cysteine 17 are cleaved as a signal peptide.

This is an uncharacterized protein from Saccharomyces cerevisiae (strain ATCC 204508 / S288c) (Baker's yeast).